Reading from the N-terminus, the 161-residue chain is Cytochrome c-type biogenesis protein CcmE (161 aa).

At 1-8 (MNARRKKR) the chain is on the cytoplasmic side. Residues 9–29 (LTLAVALIGGVAAIASLLLYA) form a helical; Signal-anchor for type II membrane protein membrane-spanning segment. Over 30–161 (LNSNLNLFYT…DYNEQQKTSY (132 aa)) the chain is Periplasmic. Heme-binding residues include histidine 131 and tyrosine 135.

This sequence belongs to the CcmE/CycJ family.

Its subcellular location is the cell inner membrane. Its function is as follows. Heme chaperone required for the biogenesis of c-type cytochromes. Transiently binds heme delivered by CcmC and transfers the heme to apo-cytochromes in a process facilitated by CcmF and CcmH. The polypeptide is Cytochrome c-type biogenesis protein CcmE (Shewanella sediminis (strain HAW-EB3)).